The primary structure comprises 313 residues: E3 ubiquitin-protein ligase SINA-like 2 (313 aa).

The segment at 1 to 26 (MSGEASTSRRKRQRVPSSVESVENGG) is disordered. The segment at 44-80 (CPICCHALTSPIFQCDNGHIACSSCCTKLRNKCPSCA) adopts an RING-type zinc-finger fold. Residues 94-277 (VVEAVMVTCP…LKMEICIRKL (184 aa)) are SBD. The segment at 97 to 155 (AVMVTCPNVKHGCTEKFSYGKELIHEKDCRFALCYCPAPNCNYSGVYKDLYSHFYVNHY) adopts an SIAH-type zinc-finger fold. Residues C102, C109, H121, C125, C132, C137, H149, and H154 each coordinate Zn(2+). A disordered region spans residues 278–313 (KKDEEEADEDEESEEEEDDDDDDDDDDEEEDADEEE). Residues 282 to 313 (EEADEDEESEEEEDDDDDDDDDDEEEDADEEE) are compositionally biased toward acidic residues.

This sequence belongs to the SINA (Seven in absentia) family.

The catalysed reaction is S-ubiquitinyl-[E2 ubiquitin-conjugating enzyme]-L-cysteine + [acceptor protein]-L-lysine = [E2 ubiquitin-conjugating enzyme]-L-cysteine + N(6)-ubiquitinyl-[acceptor protein]-L-lysine.. It functions in the pathway protein modification; protein ubiquitination. In terms of biological role, E3 ubiquitin-protein ligase that mediates ubiquitination and subsequent proteasomal degradation of target proteins. E3 ubiquitin ligases accept ubiquitin from an E2 ubiquitin-conjugating enzyme in the form of a thioester and then directly transfers the ubiquitin to targeted substrates. It probably triggers the ubiquitin-mediated degradation of different substrates. This is E3 ubiquitin-protein ligase SINA-like 2 from Arabidopsis thaliana (Mouse-ear cress).